A 202-amino-acid chain; its full sequence is Protein phosphatase inhibitor 2 family member C (202 aa).

Disordered stretches follow at residues 1–51 (MSAS…DESS) and 71–118 (PGTS…EQES). Positions 12–17 (KGILKN) are required for binding PPP1CC. Low complexity predominate over residues 19 to 35 (SSSGSSVATSGQQSGGT). Residues 43–55 (KSQKWDESSILAA) form a required for binding PPP1CC region. A compositionally biased stretch (polar residues) spans 71-80 (PGTSYMSVQD). A compositionally biased stretch (basic and acidic residues) spans 84–112 (DSVRDVEGEDSVRGVEGKEATDASDHSCE). The interval 144-147 (HYNE) is required for binding PPP1CC catalytic center, displacing metal ions and inhibition of PPP1CC catalytic activity. The tract at residues 162-202 (LQSEDNENEETPQGTNEEKTAAEESEEAPLTGGLQTQSCDP) is disordered.

The protein belongs to the protein phosphatase inhibitor 2 family. Detected in sperm (at protein level).

Functionally, functions as a protein phosphatase inhibitor. It inhibits activity of the catalytic subunit of PP1 and weakly inhibits the activity of myosin-associated phosphates. The chain is Protein phosphatase inhibitor 2 family member C from Homo sapiens (Human).